The chain runs to 282 residues: Dihydropteroate synthase (282 aa).

A Pterin-binding domain is found at 15–267 (PHVMGILNVT…DVKETVEAMR (253 aa)). Asn22 lines the Mg(2+) pocket. (7,8-dihydropterin-6-yl)methyl diphosphate-binding positions include Thr62, Asp96, Asn115, Asp185, Lys221, and 255–257 (RVH).

The protein belongs to the DHPS family. Homodimer. Mg(2+) serves as cofactor.

The enzyme catalyses (7,8-dihydropterin-6-yl)methyl diphosphate + 4-aminobenzoate = 7,8-dihydropteroate + diphosphate. It participates in cofactor biosynthesis; tetrahydrofolate biosynthesis; 7,8-dihydrofolate from 2-amino-4-hydroxy-6-hydroxymethyl-7,8-dihydropteridine diphosphate and 4-aminobenzoate: step 1/2. Functionally, catalyzes the condensation of para-aminobenzoate (pABA) with 6-hydroxymethyl-7,8-dihydropterin diphosphate (DHPt-PP) to form 7,8-dihydropteroate (H2Pte), the immediate precursor of folate derivatives. The sequence is that of Dihydropteroate synthase (folP) from Shigella flexneri.